The sequence spans 169 residues: Transmembrane protein B169L (169 aa).

The next 2 helical transmembrane spans lie at 28 to 48 (NPFIVALIITAVVLVVFFAIC) and 60 to 80 (TAIYVYICIVALLFLHYYVLN). Asn-88 carries N-linked (GlcNAc...) asparagine; by host glycosylation. Residues 107–169 (DEIIPPISPP…EVIMPSQYNN (63 aa)) are disordered. A compositionally biased stretch (low complexity) spans 140–154 (KPADSKPASSADSKP).

The protein belongs to the asfivirus B169L family.

The protein resides in the host membrane. The protein localises to the virion. This Ornithodoros (relapsing fever ticks) protein is Transmembrane protein B169L.